The following is a 425-amino-acid chain: Tyrosine--tRNA ligase (425 aa).

Tyrosine 37 serves as a coordination point for L-tyrosine. Positions 42–51 match the 'HIGH' region motif; that stretch reads PTADSLHLGH. Residues tyrosine 175 and glutamine 179 each contribute to the L-tyrosine site. A 'KMSKS' region motif is present at residues 235-239; that stretch reads KFGKT. Lysine 238 provides a ligand contact to ATP. The region spanning 357-414 is the S4 RNA-binding domain; sequence ADLQQALVSAELVPSRGQARTMISSNAVTINGEKQADPEYTFSASDRLFDRYTLLRRG.

It belongs to the class-I aminoacyl-tRNA synthetase family. TyrS type 1 subfamily. As to quaternary structure, homodimer.

It localises to the cytoplasm. The catalysed reaction is tRNA(Tyr) + L-tyrosine + ATP = L-tyrosyl-tRNA(Tyr) + AMP + diphosphate + H(+). Functionally, catalyzes the attachment of tyrosine to tRNA(Tyr) in a two-step reaction: tyrosine is first activated by ATP to form Tyr-AMP and then transferred to the acceptor end of tRNA(Tyr). The protein is Tyrosine--tRNA ligase of Pectobacterium carotovorum subsp. carotovorum (strain PC1).